Here is a 288-residue protein sequence, read N- to C-terminus: Lysosomal thioesterase PPT2 homolog (288 aa).

The first 22 residues, 1–22 (MRLRLQVLVALLTCSSISVSLA), serve as a signal peptide directing secretion. Residue S98 is the Nucleophile of the active site. N-linked (GlcNAc...) asparagine glycosylation occurs at N192. Active-site residues include D214 and H269.

It belongs to the palmitoyl-protein thioesterase family. As to expression, expressed in adult head and crop.

The protein resides in the lysosome. The catalysed reaction is hexadecanoyl-CoA + H2O = hexadecanoate + CoA + H(+). The enzyme catalyses S-hexadecanoyl-N-acetylcysteamine + H2O = N-acetylcysteamine + hexadecanoate + H(+). In terms of biological role, catalyzes the cleavage of thioester bonds from S-palmitoyl-CoA or S-palmitoyl-N-acetylcysteamine (unbranched structures) but does not have activity against palmitoylcysteine or palmitoylated proteins, branched structures or bulky head groups. Conversely, hydrolyzes both long and short chain fatty acyl-CoA substrate. In Drosophila melanogaster (Fruit fly), this protein is Lysosomal thioesterase PPT2 homolog (Ppt2).